Reading from the N-terminus, the 372-residue chain is Peptide chain release factor 1 (372 aa).

The residue at position 237 (Gln237) is an N5-methylglutamine.

It belongs to the prokaryotic/mitochondrial release factor family. Methylated by PrmC. Methylation increases the termination efficiency of RF1.

It is found in the cytoplasm. Its function is as follows. Peptide chain release factor 1 directs the termination of translation in response to the peptide chain termination codons UAG and UAA. The protein is Peptide chain release factor 1 of Anaeromyxobacter sp. (strain Fw109-5).